Here is a 402-residue protein sequence, read N- to C-terminus: APO protein 3, mitochondrial (402 aa).

A mitochondrion-targeting transit peptide spans 1-13; that stretch reads MQRRKLVEISIFV. Positions 37-59 are disordered; that stretch reads NDEDPLYADVPKPPKDKSERKPY. The segment covering 48-58 has biased composition (basic and acidic residues); it reads KPPKDKSERKP. APO domains are found at residues 127–213 and 294–380; these read RCRL…DLEK and TCGY…PVPD.

This sequence belongs to the APO family.

It localises to the mitochondrion. Functionally, may be involved in the stable assembly of several 4Fe-4S cluster-containing complexes of mitochondria. The protein is APO protein 3, mitochondrial (APO3) of Arabidopsis thaliana (Mouse-ear cress).